A 375-amino-acid polypeptide reads, in one-letter code: Platelet-derived growth factor receptor-like protein (375 aa).

Positions 1-21 (MKFWLLLGLLLLHEALEDVAG) are cleaved as a signal peptide. Residues 20 to 63 (AGQHSPKNKRPKEQGENRIKPTNKKAKPKIPKVKDRDSTDSTAK) form a disordered region. Over residues 40–50 (PTNKKAKPKIP) the composition is skewed to basic residues. An Ig-like C2-type 1 domain is found at 47 to 159 (PKIPKVKDRD…GYICRRDEAK (113 aa)). Cys-96 and Cys-143 form a disulfide bridge. Asn-219 carries an N-linked (GlcNAc...) asparagine glycan. In terms of domain architecture, Ig-like C2-type 2 spans 272–375 (PSTTILASSN…TTVATTVEFS (104 aa)). Residues Cys-293 and Cys-357 are joined by a disulfide bond.

As to quaternary structure, forms a complex composed of PDGFRL, TNK2 and GRB2.

The protein resides in the secreted. In Mus musculus (Mouse), this protein is Platelet-derived growth factor receptor-like protein (Pdgfrl).